Reading from the N-terminus, the 390-residue chain is MPPSGLRLLPLLLPLLRLLVLTPGRPAAGLSTCKTIDMELVKRKRIEAIRGQILSKLRLSSPPSQGEVPPVPLPEAVLALYNSTRDRVAGESAEPEPEPEADYYAKEVTRVLMVENTNKIYEKVKKSPHSIYMLFNTSELREAVPEPVLLSRAELRLLRLKLKAEQHVELYQKYSNDSWRYLSNRLLAPSDTPEWLSFDVTGVVRQWLSHGGEVEGFRLSAHCSCDSKDNTLQVDINGFSSSRRGDLATIHGMNRPFLLLMATPLERAQHLHSSRQRRALDTNYCFSSTEKNCCVRQLYIDFRKDLGWKWIHEPKGYHANFCLGPCPYIWSLDTQYSKVLALYNQHNPGASAAPCCVPQALEPLPIVYYVGRKPKVEQLSNMIVRSCKCS.

The first 29 residues, 1-29 (MPPSGLRLLPLLLPLLRLLVLTPGRPAAG), serve as a signal peptide directing secretion. The interval 30–74 (LSTCKTIDMELVKRKRIEAIRGQILSKLRLSSPPSQGEVPPVPLP) is straightjacket domain. The arm domain stretch occupies residues 75 to 271 (EAVLALYNST…ATPLERAQHL (197 aa)). Residues N82, N136, and N176 are each glycosylated (N-linked (GlcNAc...) asparagine). Residues 226–252 (DSKDNTLQVDINGFSSSRRGDLATIHG) are bowtie tail. Residues 244–246 (RGD) carry the Cell attachment site motif. Cystine bridges form between C285/C294, C293/C356, C322/C387, and C326/C389.

It belongs to the TGF-beta family. Homodimer; disulfide-linked. Interacts with the serine proteases, HTRA1 and HTRA3: the interaction with either inhibits TGFB1-mediated signaling and the HTRA protease activity is required for this inhibition. May interact with THSD4; this interaction may lead to sequestration by FBN1 microfibril assembly and attenuation of TGFB signaling. Interacts with CD109, DPT and ASPN. Interacts with EFEMP2. Interacts with TSKU; the interaction contributes to regulation of the hair cycle. Interacts with TGFBR3. In terms of assembly, homodimer; disulfide-linked. Interacts with transforming growth factor beta-1 (TGF-beta-1) chain; interaction is non-covalent and maintains TGF-beta-1 in a latent state; each latency-associated peptide (LAP) monomer interacts with TGF-beta-1 in the other monomer. Interacts with LTBP1; leading to regulation of TGF-beta-1 activation. Interacts with LRRC32/GARP; leading to regulation of TGF-beta-1 activation on the surface of activated regulatory T-cells (Tregs). Interacts with LRRC33/NRROS; leading to regulation of TGF-beta-1 activation in macrophages and microglia. Interacts (via cell attachment site) with integrins ITGAV and ITGB6 (ITGAV:ITGB6), leading to release of the active TGF-beta-1. Interacts with NREP; the interaction results in a decrease in TGFB1 autoinduction. Interacts with HSP90AB1; inhibits latent TGFB1 activation. As to quaternary structure, homodimer; disulfide-linked. Interacts with TGF-beta receptors (TGFBR1 and TGFBR2), leading to signal transduction. Transforming growth factor beta-1 proprotein: The precursor proprotein is cleaved in the Golgi apparatus by FURIN to form Transforming growth factor beta-1 (TGF-beta-1) and Latency-associated peptide (LAP) chains, which remain non-covalently linked, rendering TGF-beta-1 inactive. In terms of processing, N-glycosylated. Deglycosylation leads to activation of Transforming growth factor beta-1 (TGF-beta-1); mechanisms triggering deglycosylation-driven activation of TGF-beta-1 are however unclear.

It localises to the secreted. Its subcellular location is the extracellular space. The protein resides in the extracellular matrix. Its function is as follows. Transforming growth factor beta-1 proprotein: Precursor of the Latency-associated peptide (LAP) and Transforming growth factor beta-1 (TGF-beta-1) chains, which constitute the regulatory and active subunit of TGF-beta-1, respectively. Functionally, required to maintain the Transforming growth factor beta-1 (TGF-beta-1) chain in a latent state during storage in extracellular matrix. Associates non-covalently with TGF-beta-1 and regulates its activation via interaction with 'milieu molecules', such as LTBP1, LRRC32/GARP and LRRC33/NRROS, that control activation of TGF-beta-1. Interaction with LRRC33/NRROS regulates activation of TGF-beta-1 in macrophages and microglia. Interaction with LRRC32/GARP controls activation of TGF-beta-1 on the surface of activated regulatory T-cells (Tregs). Interaction with integrins (ITGAV:ITGB6 or ITGAV:ITGB8) results in distortion of the Latency-associated peptide chain and subsequent release of the active TGF-beta-1. In terms of biological role, multifunctional protein that regulates the growth and differentiation of various cell types and is involved in various processes, such as normal development, immune function, microglia function and responses to neurodegeneration. Activation into mature form follows different steps: following cleavage of the proprotein in the Golgi apparatus, Latency-associated peptide (LAP) and Transforming growth factor beta-1 (TGF-beta-1) chains remain non-covalently linked rendering TGF-beta-1 inactive during storage in extracellular matrix. At the same time, LAP chain interacts with 'milieu molecules', such as LTBP1, LRRC32/GARP and LRRC33/NRROS that control activation of TGF-beta-1 and maintain it in a latent state during storage in extracellular milieus. TGF-beta-1 is released from LAP by integrins (ITGAV:ITGB6 or ITGAV:ITGB8): integrin-binding to LAP stabilizes an alternative conformation of the LAP bowtie tail and results in distortion of the LAP chain and subsequent release of the active TGF-beta-1. Once activated following release of LAP, TGF-beta-1 acts by binding to TGF-beta receptors (TGFBR1 and TGFBR2), which transduce signal. While expressed by many cells types, TGF-beta-1 only has a very localized range of action within cell environment thanks to fine regulation of its activation by Latency-associated peptide chain (LAP) and 'milieu molecules'. Plays an important role in bone remodeling: acts as a potent stimulator of osteoblastic bone formation, causing chemotaxis, proliferation and differentiation in committed osteoblasts. Can promote either T-helper 17 cells (Th17) or regulatory T-cells (Treg) lineage differentiation in a concentration-dependent manner. At high concentrations, leads to FOXP3-mediated suppression of RORC and down-regulation of IL-17 expression, favoring Treg cell development. At low concentrations in concert with IL-6 and IL-21, leads to expression of the IL-17 and IL-23 receptors, favoring differentiation to Th17 cells. Stimulates sustained production of collagen through the activation of CREB3L1 by regulated intramembrane proteolysis (RIP). Mediates SMAD2/3 activation by inducing its phosphorylation and subsequent translocation to the nucleus. Positively regulates odontoblastic differentiation in dental papilla cells, via promotion of IPO7-mediated translocation of phosphorylated SMAD2 to the nucleus and subsequent transcription of target genes. Can induce epithelial-to-mesenchymal transition (EMT) and cell migration in various cell types. This Canis lupus familiaris (Dog) protein is Transforming growth factor beta-1 proprotein (TGFB1).